We begin with the raw amino-acid sequence, 360 residues long: uncharacterized protein (360 aa).

The ABC transporter domain maps to 4 to 235; it reads LSLQHIQKIY…PANMFVAGFI (232 aa). 37 to 44 provides a ligand contact to ATP; it reads GPSGCGKS.

It belongs to the ABC transporter superfamily.

This is an uncharacterized protein from Escherichia coli O6:H1 (strain CFT073 / ATCC 700928 / UPEC).